Reading from the N-terminus, the 438-residue chain is Xylose isomerase (438 aa).

Residues His-100 and Asp-103 contribute to the active site. Positions 231, 267, 270, 295, 306, 308, and 338 each coordinate Mg(2+).

It belongs to the xylose isomerase family. Homotetramer. Mg(2+) is required as a cofactor.

The protein localises to the cytoplasm. It catalyses the reaction alpha-D-xylose = alpha-D-xylulofuranose. The polypeptide is Xylose isomerase (Caldanaerobacter subterraneus subsp. yonseiensis (Thermoanaerobacter yonseiensis)).